A 314-amino-acid polypeptide reads, in one-letter code: Ribosomal RNA small subunit methyltransferase A (314 aa).

S-adenosyl-L-methionine contacts are provided by Asn-29, Val-31, Gly-56, Glu-77, Asp-107, and Asn-126. A disordered region spans residues 291–314 (PKADDAGDDADAQAKADGAQVSTL). A compositionally biased stretch (low complexity) spans 303-314 (QAKADGAQVSTL).

Belongs to the class I-like SAM-binding methyltransferase superfamily. rRNA adenine N(6)-methyltransferase family. RsmA subfamily.

The protein localises to the cytoplasm. It catalyses the reaction adenosine(1518)/adenosine(1519) in 16S rRNA + 4 S-adenosyl-L-methionine = N(6)-dimethyladenosine(1518)/N(6)-dimethyladenosine(1519) in 16S rRNA + 4 S-adenosyl-L-homocysteine + 4 H(+). In terms of biological role, specifically dimethylates two adjacent adenosines (A1518 and A1519) in the loop of a conserved hairpin near the 3'-end of 16S rRNA in the 30S particle. May play a critical role in biogenesis of 30S subunits. The chain is Ribosomal RNA small subunit methyltransferase A from Mycolicibacterium gilvum (strain PYR-GCK) (Mycobacterium gilvum (strain PYR-GCK)).